The primary structure comprises 462 residues: Integrator complex subunit 12 (462 aa).

Positions 42–129 (GIDSSYRPSQ…LEKPETQSSP (88 aa)) are disordered. Over residues 59–86 (ISSTKNISIKQEPKISSSLPSGNNNGKV) the composition is skewed to polar residues. Residue Lys-68 forms a Glycyl lysine isopeptide (Lys-Gly) (interchain with G-Cter in SUMO2) linkage. Over residues 88–124 (TTEKVKKEAEKRPADKMKSDITEGVDIPKKPRLEKPE) the composition is skewed to basic and acidic residues. A Phosphoserine modification is found at Ser-128. The PHD-type zinc-finger motif lies at 159–215 (GLACVVCRQMMVASGNQLVECQECHNLYHRDCHKPQVTDKEANDPRLVWYCARCTRQ). A Glycyl lysine isopeptide (Lys-Gly) (interchain with G-Cter in SUMO2) cross-link involves residue Lys-254. Positions 301-328 (SSAGPSTAKLSSTTQNSTGKPATSSANQ) are enriched in polar residues. The interval 301-462 (SSAGPSTAKL…KKAAQKKLKK (162 aa)) is disordered. Composition is skewed to low complexity over residues 347–358 (KIGSNNSTTPTV) and 396–437 (GNSS…GPTS). The span at 449–462 (QMVKKKAAQKKLKK) shows a compositional bias: basic residues.

The protein belongs to the Integrator subunit 12 family. As to quaternary structure, component of the Integrator complex, composed of core subunits INTS1, INTS2, INTS3, INTS4, INTS5, INTS6, INTS7, INTS8, INTS9/RC74, INTS10, INTS11/CPSF3L, INTS12, INTS13, INTS14 and INTS15. The core complex associates with protein phosphatase 2A subunits PPP2CA and PPP2R1A, to form the Integrator-PP2A (INTAC) complex. Post-translationally, dephosphorylated at Ser-128 by the PNUTS-PP1 complex, promoting RNA polymerase II transcription pause-release.

It localises to the nucleus. Functionally, component of the integrator complex, a multiprotein complex that terminates RNA polymerase II (Pol II) transcription in the promoter-proximal region of genes. The integrator complex provides a quality checkpoint during transcription elongation by driving premature transcription termination of transcripts that are unfavorably configured for transcriptional elongation: the complex terminates transcription by (1) catalyzing dephosphorylation of the C-terminal domain (CTD) of Pol II subunit POLR2A/RPB1 and SUPT5H/SPT5, (2) degrading the exiting nascent RNA transcript via endonuclease activity and (3) promoting the release of Pol II from bound DNA. The integrator complex is also involved in terminating the synthesis of non-coding Pol II transcripts, such as enhancer RNAs (eRNAs), small nuclear RNAs (snRNAs), telomerase RNAs and long non-coding RNAs (lncRNAs). Mediates recruitment of cytoplasmic dynein to the nuclear envelope, probably as component of the integrator complex. The protein is Integrator complex subunit 12 (INTS12) of Macaca fascicularis (Crab-eating macaque).